The sequence spans 432 residues: Glutamate-1-semialdehyde 2,1-aminomutase (432 aa).

N6-(pyridoxal phosphate)lysine is present on K272.

Belongs to the class-III pyridoxal-phosphate-dependent aminotransferase family. HemL subfamily. In terms of assembly, homodimer. Pyridoxal 5'-phosphate serves as cofactor.

Its subcellular location is the cytoplasm. It carries out the reaction (S)-4-amino-5-oxopentanoate = 5-aminolevulinate. Its pathway is porphyrin-containing compound metabolism; protoporphyrin-IX biosynthesis; 5-aminolevulinate from L-glutamyl-tRNA(Glu): step 2/2. It participates in porphyrin-containing compound metabolism; chlorophyll biosynthesis. This chain is Glutamate-1-semialdehyde 2,1-aminomutase, found in Picosynechococcus sp. (strain ATCC 27264 / PCC 7002 / PR-6) (Agmenellum quadruplicatum).